The primary structure comprises 329 residues: Elongation factor Ts (329 aa).

The segment at 79-82 (TDFV) is involved in Mg(2+) ion dislocation from EF-Tu.

The protein belongs to the EF-Ts family.

Its subcellular location is the cytoplasm. Functionally, associates with the EF-Tu.GDP complex and induces the exchange of GDP to GTP. It remains bound to the aminoacyl-tRNA.EF-Tu.GTP complex up to the GTP hydrolysis stage on the ribosome. This chain is Elongation factor Ts, found in Phocaeicola vulgatus (strain ATCC 8482 / DSM 1447 / JCM 5826 / CCUG 4940 / NBRC 14291 / NCTC 11154) (Bacteroides vulgatus).